The following is a 136-amino-acid chain: Large ribosomal subunit protein uL16 (136 aa).

It belongs to the universal ribosomal protein uL16 family. In terms of assembly, part of the 50S ribosomal subunit.

Binds 23S rRNA and is also seen to make contacts with the A and possibly P site tRNAs. In Pseudoalteromonas atlantica (strain T6c / ATCC BAA-1087), this protein is Large ribosomal subunit protein uL16.